Here is a 437-residue protein sequence, read N- to C-terminus: Trigger factor (437 aa).

Residues 163 to 248 enclose the PPIase FKBP-type domain; the sequence is GDRVIIDFEG…LNNVSEPTLP (86 aa).

Belongs to the FKBP-type PPIase family. Tig subfamily.

It is found in the cytoplasm. It catalyses the reaction [protein]-peptidylproline (omega=180) = [protein]-peptidylproline (omega=0). Functionally, involved in protein export. Acts as a chaperone by maintaining the newly synthesized protein in an open conformation. Functions as a peptidyl-prolyl cis-trans isomerase. This is Trigger factor from Neisseria gonorrhoeae (strain NCCP11945).